The primary structure comprises 289 residues: Serine/threonine-protein phosphatase Pgam5, mitochondrial (289 aa).

Residues 7–23 traverse the membrane as a helical segment; the sequence is LVCGAGAGLAAFYLSRL.

This sequence belongs to the phosphoglycerate mutase family. BPG-dependent PGAM subfamily. Interacts with Pk92B/ASK1.

Its subcellular location is the mitochondrion outer membrane. It catalyses the reaction O-phospho-L-seryl-[protein] + H2O = L-seryl-[protein] + phosphate. The catalysed reaction is O-phospho-L-threonyl-[protein] + H2O = L-threonyl-[protein] + phosphate. Functionally, displays phosphatase activity for serine/threonine residues, and dephosphorylates and activates Pk92B kinase. Has apparently no phosphoglycerate mutase activity. This Drosophila ananassae (Fruit fly) protein is Serine/threonine-protein phosphatase Pgam5, mitochondrial.